Reading from the N-terminus, the 105-residue chain is Circadian clock oscillator protein KaiB1 (105 aa).

It belongs to the KaiB family. Homotetramer in solution and crystals formed by 2 dimers. Only elutes as a homotetramer in size exclusion chromatography, interacts with KaiC1 and KaiC3. The KaiABC complex composition changes during the circadian cycle to control KaiC phosphorylation. Complexes KaiC(6), KaiA(2-4):KaiC(6), KaiB(6):KaiC(6) and KaiC(6):KaiB(6):KaiA(12) are among the most important forms, many form cooperatively. Undergoes a major conformational rearrangment; in the free state forms homotetramers as a dimer of dimers. When bound to the CI domain of KaiC switches to a monomeric thioredoxin-fold (KaiB(fs)). KaiB(fs) binds CikA, leading it to dephosphorylate phospho-RpaA.

Its function is as follows. Key component of the KaiABC oscillator complex, which constitutes the main circadian regulator in cyanobacteria. Complex composition changes during the circadian cycle to control KaiC phosphorylation. KaiA stimulates KaiC autophosphorylation, while KaiB sequesters KaiA, leading to KaiC autodephosphorylation. Phospho-Ser-431 KaiC accumulation triggers binding of KaiB to form the KaiB(6):KaiC(6) complex, leading to changes in output regulators CikA and SasA. KaiB switches to a thioredoxin-like fold (KaiB(fs)) when bound to KaiC. KaiB(6):KaiC(6) formation exposes a site for KaiA binding that sequesters KaiA from KaiC, making the KaiC(6):KaiB(6):KaiA(12) complex that results in KaiC autodephosphorylation. In terms of biological role, component of the oscillator and circadian clock in this organism, enhances fitness in a rhythmic environment. The homotetramer reduces the ATPase activity of KaiC3 by 35%. A metamorphic protein which reversibly switches between an inactive tetrameric fold and a rare, thioredoxin-like monomeric fold (KaiB(fs)). KaiB(fs) binds phospho-KaiC, KaiA and CikA. KaiA and CikA compete for binding to KaiB(fs), and KaiB(fs) and SasA compete for binding to KaiC, thus the clock oscillator and output signal pathway are tightly coupled. This chain is Circadian clock oscillator protein KaiB1, found in Synechocystis sp. (strain ATCC 27184 / PCC 6803 / Kazusa).